We begin with the raw amino-acid sequence, 572 residues long: Proline--tRNA ligase (572 aa).

It belongs to the class-II aminoacyl-tRNA synthetase family. ProS type 1 subfamily. As to quaternary structure, homodimer.

The protein resides in the cytoplasm. It carries out the reaction tRNA(Pro) + L-proline + ATP = L-prolyl-tRNA(Pro) + AMP + diphosphate. Its function is as follows. Catalyzes the attachment of proline to tRNA(Pro) in a two-step reaction: proline is first activated by ATP to form Pro-AMP and then transferred to the acceptor end of tRNA(Pro). As ProRS can inadvertently accommodate and process non-cognate amino acids such as alanine and cysteine, to avoid such errors it has two additional distinct editing activities against alanine. One activity is designated as 'pretransfer' editing and involves the tRNA(Pro)-independent hydrolysis of activated Ala-AMP. The other activity is designated 'posttransfer' editing and involves deacylation of mischarged Ala-tRNA(Pro). The misacylated Cys-tRNA(Pro) is not edited by ProRS. The chain is Proline--tRNA ligase from Salmonella choleraesuis (strain SC-B67).